We begin with the raw amino-acid sequence, 452 residues long: Phosphoglucosamine mutase (452 aa).

Ser103 acts as the Phosphoserine intermediate in catalysis. The Mg(2+) site is built by Ser103, Asp243, Asp245, and Asp247. A Phosphoserine modification is found at Ser103.

It belongs to the phosphohexose mutase family. The cofactor is Mg(2+). Post-translationally, activated by phosphorylation.

It catalyses the reaction alpha-D-glucosamine 1-phosphate = D-glucosamine 6-phosphate. Catalyzes the conversion of glucosamine-6-phosphate to glucosamine-1-phosphate. The polypeptide is Phosphoglucosamine mutase (Exiguobacterium sp. (strain ATCC BAA-1283 / AT1b)).